The chain runs to 295 residues: Guided entry of tail-anchored proteins factor CAMLG (295 aa).

Disordered regions lie at residues Met-1–Pro-73 and Gly-127–His-148. The Cytoplasmic portion of the chain corresponds to Met-1–Arg-188. The segment covering Ala-15–Gln-24 has biased composition (polar residues). At Ser-53 the chain carries Phosphoserine. Positions Gly-127–Leu-138 are enriched in basic and acidic residues. A helical transmembrane segment spans residues Ile-189–Val-206. The Lumenal portion of the chain corresponds to Cys-207 to Lys-208. Cysteines 207 and 283 form a disulfide. The chain crosses the membrane as a helical span at residues Tyr-209–Tyr-227. Residues Lys-228–Glu-268 are Cytoplasmic-facing. A helical transmembrane segment spans residues Val-269 to Leu-287. The Lumenal portion of the chain corresponds to Glu-288–Pro-295.

Component of the Golgi to ER traffic (GET) complex, which is composed of GET1/WRB, CAMLG/GET2 and GET3/TRC40. Within the complex, GET1 and CAMLG form a heterotetramer which is stabilized by phosphatidylinositol binding and which binds to the GET3 homodimer. Interacts (via C-terminus) with GET1. Interacts (via N-terminus) with GET3. GET3 shows a higher affinity for CAMLG than for GET1. Interacts (via N-terminus) with TNFRSF13B/TACI (via C-terminus). As to expression, in the central nervous system, expressed in astrocytes, microglia and neurons (at protein level).

The protein localises to the endoplasmic reticulum membrane. Required for the post-translational delivery of tail-anchored (TA) proteins to the endoplasmic reticulum. Together with GET1/WRB, acts as a membrane receptor for soluble GET3/TRC40, which recognizes and selectively binds the transmembrane domain of TA proteins in the cytosol. Required for the stability of GET1. Stimulates calcium signaling in T cells through its involvement in elevation of intracellular calcium. Essential for the survival of peripheral follicular B cells. In Rattus norvegicus (Rat), this protein is Guided entry of tail-anchored proteins factor CAMLG.